The chain runs to 196 residues: Xanthine phosphoribosyltransferase (196 aa).

2 residues coordinate xanthine: L26 and N33. 5-phospho-alpha-D-ribose 1-diphosphate is bound at residue 134–138; the sequence is ASGEA. Residue K162 participates in xanthine binding.

It belongs to the purine/pyrimidine phosphoribosyltransferase family. Xpt subfamily. As to quaternary structure, homodimer.

It localises to the cytoplasm. The catalysed reaction is XMP + diphosphate = xanthine + 5-phospho-alpha-D-ribose 1-diphosphate. It functions in the pathway purine metabolism; XMP biosynthesis via salvage pathway; XMP from xanthine: step 1/1. Its function is as follows. Converts the preformed base xanthine, a product of nucleic acid breakdown, to xanthosine 5'-monophosphate (XMP), so it can be reused for RNA or DNA synthesis. This Moorella thermoacetica (strain ATCC 39073 / JCM 9320) protein is Xanthine phosphoribosyltransferase.